Consider the following 207-residue polypeptide: MSERLLVLVRHGQSEWNLKNLFTGWKDPDLTELGAAEAKDAGRKLKAQGFVFDIAFTSTLIRAQHTLDLVLKELDQTGIPVRKDQALNERDYGDLSGLNKDEARKKWGDEQVLVWRRSYDVPPPGGESLKDTLARTLPYFVQEILPCVLRGECTLVAAHGNSLRALVMVLEKLSPEQILARELATGAPVIYRLNADATVASKLDLAA.

Substrate is bound by residues 10–17 (RHGQSEWN), 23–24 (TG), arginine 62, 89–92 (ERDY), lysine 100, 116–117 (RR), and 160–161 (GN). The active-site Tele-phosphohistidine intermediate is histidine 11. Glutamate 89 (proton donor/acceptor) is an active-site residue.

The protein belongs to the phosphoglycerate mutase family. BPG-dependent PGAM subfamily. In terms of assembly, homodimer.

The catalysed reaction is (2R)-2-phosphoglycerate = (2R)-3-phosphoglycerate. Its pathway is carbohydrate degradation; glycolysis; pyruvate from D-glyceraldehyde 3-phosphate: step 3/5. In terms of biological role, catalyzes the interconversion of 2-phosphoglycerate and 3-phosphoglycerate. The chain is 2,3-bisphosphoglycerate-dependent phosphoglycerate mutase from Nitrobacter winogradskyi (strain ATCC 25391 / DSM 10237 / CIP 104748 / NCIMB 11846 / Nb-255).